A 124-amino-acid chain; its full sequence is Small ribosomal subunit protein uS12 (124 aa).

Aspartate 89 is subject to 3-methylthioaspartic acid.

This sequence belongs to the universal ribosomal protein uS12 family. As to quaternary structure, part of the 30S ribosomal subunit. Contacts proteins S8 and S17. May interact with IF1 in the 30S initiation complex.

With S4 and S5 plays an important role in translational accuracy. In terms of biological role, interacts with and stabilizes bases of the 16S rRNA that are involved in tRNA selection in the A site and with the mRNA backbone. Located at the interface of the 30S and 50S subunits, it traverses the body of the 30S subunit contacting proteins on the other side and probably holding the rRNA structure together. The combined cluster of proteins S8, S12 and S17 appears to hold together the shoulder and platform of the 30S subunit. The protein is Small ribosomal subunit protein uS12 of Shewanella sediminis (strain HAW-EB3).